The sequence spans 410 residues: Ribosomal protein S6 kinase-related protein (410 aa).

Residues 107–274 form the Protein kinase domain; it reads LKILGLVAKG…GTLQYMAPEV (168 aa). ATP is bound by residues 113 to 121 and Lys-136; that span reads VAKGSFGTV. Asp-229 serves as the catalytic Proton acceptor.

It belongs to the protein kinase superfamily. Ser/Thr protein kinase family.

The enzyme catalyses L-seryl-[protein] + ATP = O-phospho-L-seryl-[protein] + ADP + H(+). It catalyses the reaction L-threonyl-[protein] + ATP = O-phospho-L-threonyl-[protein] + ADP + H(+). This chain is Ribosomal protein S6 kinase-related protein, found in Homo sapiens (Human).